The primary structure comprises 107 residues: MGDSQSDEPEGDIAVQTAPPELKRPPLYAVVLLNDDYTPMDFVIEILQQYFALNLDQATQVMLTVHYEGKGVAGVYPRDIAETKANQVNNYARSQGHPLLCQIEPKD.

The protein belongs to the ClpS family. In terms of assembly, binds to the N-terminal domain of the chaperone ClpA.

Its function is as follows. Involved in the modulation of the specificity of the ClpAP-mediated ATP-dependent protein degradation. The chain is ATP-dependent Clp protease adapter protein ClpS from Acinetobacter baylyi (strain ATCC 33305 / BD413 / ADP1).